The sequence spans 126 residues: Probable prefoldin subunit 6 (126 aa).

The protein belongs to the prefoldin subunit beta family. In terms of assembly, heterohexamer of two PFD-alpha type and four PFD-beta type subunits. As to expression, expressed in embryonic blastomeres and gonads.

It localises to the cytoplasm. Functionally, binds specifically to cytosolic chaperonin (c-CPN) and transfers target proteins to it. Binds to nascent polypeptide chain and promotes folding in an environment in which there are many competing pathways for nonnative proteins. Required for positioning of the mitotic spindle. This chain is Probable prefoldin subunit 6 (pfd-6), found in Caenorhabditis elegans.